We begin with the raw amino-acid sequence, 299 residues long: Lathosterol oxidase (299 aa).

3 helical membrane passes run Ile-32–Leu-52, Phe-79–Ile-99, and Phe-117–Ile-137. The 129-residue stretch at Ile-124–Gly-252 folds into the Fatty acid hydroxylase domain. Positions His-138 to His-143 match the Histidine box-1 motif. Residues His-151–His-155 carry the Histidine box-2 motif. A helical transmembrane segment spans residues Ile-186 to Ile-206. The Histidine box-3 motif lies at His-228–His-233. Ser-253 is modified (phosphoserine). Residues Glu-274 to Glu-299 are disordered. The span at Lys-286 to Glu-299 shows a compositional bias: basic and acidic residues.

Belongs to the sterol desaturase family. Fe cation serves as cofactor.

Its subcellular location is the endoplasmic reticulum membrane. It catalyses the reaction a Delta(7)-sterol + 2 Fe(II)-[cytochrome b5] + O2 + 2 H(+) = a Delta(5),Delta(7)-sterol + 2 Fe(III)-[cytochrome b5] + 2 H2O. The catalysed reaction is lathosterol + 2 Fe(II)-[cytochrome b5] + O2 + 2 H(+) = 7-dehydrocholesterol + 2 Fe(III)-[cytochrome b5] + 2 H2O. It carries out the reaction 5alpha-cholesta-7,24-dien-3beta-ol + 2 Fe(II)-[cytochrome b5] + O2 + 2 H(+) = 7-dehydrodesmosterol + 2 Fe(III)-[cytochrome b5] + 2 H2O. The protein operates within steroid biosynthesis; cholesterol biosynthesis. Its function is as follows. Catalyzes the penultimate step of the biosynthesis of cholesterol, the dehydrogenation of lathosterol into 7-dehydrocholesterol (7-DHC). Cholesterol is the major sterol component in mammalian membranes and a precursor for bile acid and steroid hormone synthesis. In addition to its essential role in cholesterol biosynthesis, it also indirectly regulates ferroptosis through the production of 7-DHC. By diverting the spread of damage caused by peroxyl radicals from the phospholipid components to its sterol nucleus, 7-DHC prevents this form of cell death. This Homo sapiens (Human) protein is Lathosterol oxidase.